Consider the following 169-residue polypeptide: PTS system glucose-specific EIIA component (169 aa).

The 105-residue stretch at 39–143 (DVVFAEKIVG…STLTPVVISN (105 aa)) folds into the PTS EIIA type-1 domain. Zn(2+)-binding residues include H76 and H91. H91 serves as the catalytic Tele-phosphohistidine intermediate; for EIIA activity. H91 is subject to Phosphohistidine; by HPr.

Heterodimer with glycerol kinase (glpk). It depends on Zn(2+) as a cofactor.

The protein resides in the cytoplasm. The phosphoenolpyruvate-dependent sugar phosphotransferase system (sugar PTS), a major carbohydrate active transport system, catalyzes the phosphorylation of incoming sugar substrates concomitantly with their translocation across the cell membrane. The enzyme II complex composed of PtsG and Crr is involved in glucose transport. The sequence is that of PTS system glucose-specific EIIA component (crr) from Salmonella typhi.